The sequence spans 260 residues: Transmembrane protein 106C (260 aa).

A lipid anchor (N-myristoyl glycine) is attached at G2. A helical transmembrane segment spans residues 85 to 105 (YVLLSVLLCLLASGLVFFFLF). N171 carries an N-linked (GlcNAc...) asparagine glycan. A helical membrane pass occupies residues 196 to 216 (SYVYFYCTLPAILVHNIVIFM).

The protein belongs to the TMEM106 family. As to quaternary structure, interacts with TMEM106B.

It localises to the endoplasmic reticulum membrane. Its subcellular location is the membrane. This is Transmembrane protein 106C (Tmem106c) from Rattus norvegicus (Rat).